A 394-amino-acid chain; its full sequence is Mannosyl-3-phosphoglycerate synthase (394 aa).

This sequence belongs to the glycosyltransferase 2 family. Requires Mg(2+) as cofactor.

It localises to the cytoplasm. The enzyme catalyses (2R)-3-phosphoglycerate + GDP-alpha-D-mannose = 2-O-(alpha-D-mannosyl)-3-phosphoglycerate + GDP + H(+). The protein operates within carbohydrate biosynthesis; 2-(alpha-D-mannosyl)-D-glycerate biosynthesis; 2-(alpha-D-mannosyl)-D-glycerate from GDP-alpha-D-mannose (MPG route): step 1/2. Its function is as follows. Transfers a mannosyl group from GDP-mannose to phosphoglycerate to form mannosyl-3-phosphoglycerate (MPG). The enzyme is absolutely specific for GDP-mannose and 3-phosphoglycerate, and transfers the mannosyl group with retention of configuration. The protein is Mannosyl-3-phosphoglycerate synthase (mngA) of Pyrococcus horikoshii (strain ATCC 700860 / DSM 12428 / JCM 9974 / NBRC 100139 / OT-3).